Reading from the N-terminus, the 532-residue chain is Flavin-containing monooxygenase 3 (532 aa).

Residues 9 to 13, glutamate 32, 40 to 41, and 61 to 62 contribute to the FAD site; these read GAGVS, LW, and NS. Residues 60–61 and 195–198 contribute to the NADP(+) site; these read TN and SGCD. Serine 401 carries the phosphoserine modification. A helical membrane pass occupies residues 512 to 532; sequence CHLVKLFVLPVLFIAVFLALI.

This sequence belongs to the FMO family. FAD is required as a cofactor.

Its subcellular location is the microsome membrane. It is found in the endoplasmic reticulum membrane. It catalyses the reaction trimethylamine + NADPH + O2 = trimethylamine N-oxide + NADP(+) + H2O. The catalysed reaction is N,N-dimethylaniline + NADPH + O2 + H(+) = N,N-dimethylaniline N-oxide + NADP(+) + H2O. It carries out the reaction hypotaurine + NADPH + O2 + H(+) = taurine + NADP(+) + H2O. The enzyme catalyses (S)-nicotine + NADPH + O2 = trans-(S)-nicotine N(1')-oxide + NADP(+) + H2O. It catalyses the reaction albendazole + NADPH + O2 + H(+) = albendazole S-oxide + NADP(+) + H2O. In terms of biological role, essential hepatic enzyme that catalyzes the oxygenation of a wide variety of nitrogen- and sulfur-containing compounds including drugs as well as dietary compounds. Plays an important role in the metabolism of trimethylamine (TMA), via the production of trimethylamine N-oxide (TMAO) metabolite. TMA is generated by the action of gut microbiota using dietary precursors such as choline, choline containing compounds, betaine or L-carnitine. By regulating TMAO concentration, FMO3 directly impacts both platelet responsiveness and rate of thrombus formation. This chain is Flavin-containing monooxygenase 3 (FMO3), found in Canis lupus familiaris (Dog).